The sequence spans 111 residues: Sulditoxin subunit B (111 aa).

A signal peptide spans 1-19; the sequence is MKTLLLALAVVVLVCLGSA. A propeptide spanning residues 20-34 is cleaved from the precursor; that stretch reads NELGLGRQQIDRGRR. Residue glutamine 35 is modified to Pyrrolidone carboxylic acid. 5 disulfide bridges follow: cysteine 44–cysteine 68, cysteine 47–cysteine 55, cysteine 61–cysteine 87, cysteine 91–cysteine 102, and cysteine 103–cysteine 108.

Belongs to the three-finger toxin family. Ancestral subfamily. Boigatoxin sub-subfamily. Heterodimer of sulditoxin subunits A and B; probably disulfide-linked. As to expression, expressed by the venom gland.

Its subcellular location is the secreted. In terms of biological role, reptile-specific neurotoxin (tested on geckos). Inhibits nicotinic acetylcholine receptor (nAChR). Not toxic to mammals (tested on mice). This Spilotes sulphureus (Amazon puffing snake) protein is Sulditoxin subunit B.